The primary structure comprises 322 residues: 4-hydroxy-3-methylbut-2-enyl diphosphate reductase (322 aa).

Residue Cys15 participates in [4Fe-4S] cluster binding. (2E)-4-hydroxy-3-methylbut-2-enyl diphosphate contacts are provided by His44 and His77. Dimethylallyl diphosphate contacts are provided by His44 and His77. Residues His44 and His77 each contribute to the isopentenyl diphosphate site. [4Fe-4S] cluster is bound at residue Cys99. His127 contacts (2E)-4-hydroxy-3-methylbut-2-enyl diphosphate. His127 contributes to the dimethylallyl diphosphate binding site. His127 contributes to the isopentenyl diphosphate binding site. Glu129 acts as the Proton donor in catalysis. Thr168 serves as a coordination point for (2E)-4-hydroxy-3-methylbut-2-enyl diphosphate. [4Fe-4S] cluster is bound at residue Cys198. Positions 226, 227, 228, and 270 each coordinate (2E)-4-hydroxy-3-methylbut-2-enyl diphosphate. Ser226, Ser227, Asn228, and Ser270 together coordinate dimethylallyl diphosphate. Residues Ser226, Ser227, Asn228, and Ser270 each coordinate isopentenyl diphosphate.

This sequence belongs to the IspH family. [4Fe-4S] cluster is required as a cofactor.

It carries out the reaction isopentenyl diphosphate + 2 oxidized [2Fe-2S]-[ferredoxin] + H2O = (2E)-4-hydroxy-3-methylbut-2-enyl diphosphate + 2 reduced [2Fe-2S]-[ferredoxin] + 2 H(+). The enzyme catalyses dimethylallyl diphosphate + 2 oxidized [2Fe-2S]-[ferredoxin] + H2O = (2E)-4-hydroxy-3-methylbut-2-enyl diphosphate + 2 reduced [2Fe-2S]-[ferredoxin] + 2 H(+). The protein operates within isoprenoid biosynthesis; dimethylallyl diphosphate biosynthesis; dimethylallyl diphosphate from (2E)-4-hydroxy-3-methylbutenyl diphosphate: step 1/1. It functions in the pathway isoprenoid biosynthesis; isopentenyl diphosphate biosynthesis via DXP pathway; isopentenyl diphosphate from 1-deoxy-D-xylulose 5-phosphate: step 6/6. In terms of biological role, catalyzes the conversion of 1-hydroxy-2-methyl-2-(E)-butenyl 4-diphosphate (HMBPP) into a mixture of isopentenyl diphosphate (IPP) and dimethylallyl diphosphate (DMAPP). Acts in the terminal step of the DOXP/MEP pathway for isoprenoid precursor biosynthesis. In Neisseria meningitidis serogroup A / serotype 4A (strain DSM 15465 / Z2491), this protein is 4-hydroxy-3-methylbut-2-enyl diphosphate reductase.